We begin with the raw amino-acid sequence, 495 residues long: Phosphomethylpyrimidine synthase (495 aa).

Substrate-binding positions include Asn125, Met154, Tyr183, His219, 239-241, 280-283, and Glu319; these read SRG and DGLR. His323 contributes to the Zn(2+) binding site. Tyr346 serves as a coordination point for substrate. Residue His387 participates in Zn(2+) binding. Residues Cys467, Cys470, and Cys475 each coordinate [4Fe-4S] cluster.

This sequence belongs to the ThiC family. Requires [4Fe-4S] cluster as cofactor.

The enzyme catalyses 5-amino-1-(5-phospho-beta-D-ribosyl)imidazole + S-adenosyl-L-methionine = 4-amino-2-methyl-5-(phosphooxymethyl)pyrimidine + CO + 5'-deoxyadenosine + formate + L-methionine + 3 H(+). Its pathway is cofactor biosynthesis; thiamine diphosphate biosynthesis. In terms of biological role, catalyzes the synthesis of the hydroxymethylpyrimidine phosphate (HMP-P) moiety of thiamine from aminoimidazole ribotide (AIR) in a radical S-adenosyl-L-methionine (SAM)-dependent reaction. The chain is Phosphomethylpyrimidine synthase from Leptospira interrogans serogroup Icterohaemorrhagiae serovar copenhageni (strain Fiocruz L1-130).